The following is a 422-amino-acid chain: 3-isopropylmalate dehydratase large subunit (422 aa).

Residues cysteine 294, cysteine 354, and cysteine 357 each contribute to the [4Fe-4S] cluster site.

It belongs to the aconitase/IPM isomerase family. LeuC type 2 subfamily. In terms of assembly, heterodimer of LeuC and LeuD. Requires [4Fe-4S] cluster as cofactor.

It carries out the reaction (2R,3S)-3-isopropylmalate = (2S)-2-isopropylmalate. The protein operates within amino-acid biosynthesis; L-leucine biosynthesis; L-leucine from 3-methyl-2-oxobutanoate: step 2/4. Catalyzes the isomerization between 2-isopropylmalate and 3-isopropylmalate, via the formation of 2-isopropylmaleate. The polypeptide is 3-isopropylmalate dehydratase large subunit (Mycolicibacterium smegmatis (strain ATCC 700084 / mc(2)155) (Mycobacterium smegmatis)).